Here is a 251-residue protein sequence, read N- to C-terminus: Outer membrane protein assembly factor BamD (251 aa).

The N-terminal stretch at 1 to 19 (MKLTKLLSALLVIGLVLGG) is a signal peptide. C20 carries the N-palmitoyl cysteine lipid modification. The S-diacylglycerol cysteine moiety is linked to residue C20. TPR repeat units follow at residues 33–66 (IATL…HPGN), 70–103 (PQAE…HPAN), and 166–199 (AGKE…YQTT).

Belongs to the BamD family. In terms of assembly, part of the Bam complex.

The protein resides in the cell outer membrane. Functionally, part of the outer membrane protein assembly complex, which is involved in assembly and insertion of beta-barrel proteins into the outer membrane. The protein is Outer membrane protein assembly factor BamD of Rickettsia prowazekii (strain Madrid E).